Reading from the N-terminus, the 631-residue chain is Extracellular metalloproteinase mep (631 aa).

A signal peptide spans 1 to 19; that stretch reads MHGLRLVCSIGTLPLVILA. Residues 20–241 constitute a propeptide that is removed on maturation; that stretch reads YPAASLHTTS…VHGVVDYVAD (222 aa). N282, N332, and N364 each carry an N-linked (GlcNAc...) asparagine glycan. H425 lines the Zn(2+) pocket. E426 is an active-site residue. H429 contributes to the Zn(2+) binding site. N470 and N505 each carry an N-linked (GlcNAc...) asparagine glycan.

This sequence belongs to the peptidase M36 family. Zn(2+) is required as a cofactor.

The protein localises to the secreted. Functionally, secreted metalloproteinase that allows assimilation of proteinaceous substrates. In Aspergillus niger (strain ATCC MYA-4892 / CBS 513.88 / FGSC A1513), this protein is Extracellular metalloproteinase mep (mep).